Here is a 640-residue protein sequence, read N- to C-terminus: SUMO-activating enzyme subunit 2 (640 aa).

ATP contacts are provided by residues 24–29 (GAGGIG), Asp-48, 56–59 (NLNR), Lys-72, 95–96 (SI), and 117–122 (DNRAAR). Positions 158 and 161 each coordinate Zn(2+). Lys-164 participates in a covalent cross-link: Glycyl lysine isopeptide (Lys-Gly) (interchain with G-Cter in SUMO1). The active-site Glycyl thioester intermediate is Cys-173. Lys-190 participates in a covalent cross-link: Glycyl lysine isopeptide (Lys-Gly) (interchain with G-Cter in SUMO). Residues 202–231 (ADQEVSPDRADPEAAWEPTEAEARARASNE) form a disordered region. A Phosphoserine modification is found at Ser-207. Residues 222–231 (AEARARASNE) show a composition bias toward basic and acidic residues. Lys-236 is covalently cross-linked (Glycyl lysine isopeptide (Lys-Gly) (interchain with G-Cter in SUMO1); alternate). Glycyl lysine isopeptide (Lys-Gly) (interchain with G-Cter in SUMO2); alternate cross-links involve residues Lys-236 and Lys-257. Glycyl lysine isopeptide (Lys-Gly) (interchain with G-Cter in SUMO); alternate cross-links involve residues Lys-257 and Lys-271. At Lys-271 the chain carries N6-acetyllysine; alternate. Residue Lys-275 forms a Glycyl lysine isopeptide (Lys-Gly) (interchain with G-Cter in SUMO) linkage. A Glycyl lysine isopeptide (Lys-Gly) (interchain with G-Cter in SUMO2) cross-link involves residue Lys-371. Lys-420 participates in a covalent cross-link: Glycyl lysine isopeptide (Lys-Gly) (interchain with G-Cter in SUMO1); alternate. A Glycyl lysine isopeptide (Lys-Gly) (interchain with G-Cter in SUMO2); alternate cross-link involves residue Lys-420. Zn(2+)-binding residues include Cys-441 and Cys-444. Ser-507 carries the phosphoserine modification. A Glycyl lysine isopeptide (Lys-Gly) (interchain with G-Cter in SUMO2) cross-link involves residue Lys-540. The span at 551 to 563 (PEKVGPKQAEDAA) shows a compositional bias: basic and acidic residues. The segment at 551 to 640 (PEKVGPKQAE…EELDDVIALD (90 aa)) is disordered. Polar residues predominate over residues 565 to 582 (SITNGSDDGAQPSTSTAQ). Residues 583 to 597 (EQDDVLIVDSDEEDS) show a composition bias toward acidic residues. Ser-592 carries the post-translational modification Phosphoserine. The segment covering 606–630 (EERSRKRKLDEKENLSAKRSRIEQK) has biased composition (basic and acidic residues). Residue Lys-611 forms a Glycyl lysine isopeptide (Lys-Gly) (interchain with G-Cter in SUMO) linkage. Lys-613 participates in a covalent cross-link: Glycyl lysine isopeptide (Lys-Gly) (interchain with G-Cter in SUMO); alternate. At Lys-613 the chain carries N6-acetyllysine; alternate. Glycyl lysine isopeptide (Lys-Gly) (interchain with G-Cter in SUMO) cross-links involve residues Lys-617 and Lys-623. The span at 631-640 (EELDDVIALD) shows a compositional bias: acidic residues.

This sequence belongs to the ubiquitin-activating E1 family. In terms of assembly, heterodimer of SAE1 and UBA2/SAE2. The heterodimer corresponds to the two domains that are encoded on a single polypeptide chain in ubiquitin-activating enzyme E1. Interacts with UBE2I. Post-translationally, sumoylated with SUMO1 and SUMO2/3 and by UBC9. Sumoylation at Lys-236 inhibits enzymatic activity. Sumoylation at the C-terminal lysine cluster plays an essential role in nuclear trafficking.

It is found in the cytoplasm. The protein resides in the nucleus. It participates in protein modification; protein sumoylation. Its function is as follows. The heterodimer acts as an E1 ligase for SUMO1, SUMO2, SUMO3, and probably SUMO4. It mediates ATP-dependent activation of SUMO proteins followed by formation of a thioester bond between a SUMO protein and a conserved active site cysteine residue on UBA2/SAE2. The protein is SUMO-activating enzyme subunit 2 (UBA2) of Homo sapiens (Human).